The chain runs to 210 residues: PEP-dependent dihydroxyacetone kinase, ADP-binding subunit DhaL (210 aa).

In terms of domain architecture, DhaL spans 6–206; it reads TQIVNWLTRC…VMFMMQMLAL (201 aa). Residues Asp-30, Asp-35, and Asp-37 each coordinate Mg(2+). ADP is bound by residues 38–41, 79–80, Gly-121, Met-130, Arg-178, and 191–193; these read HGLN, AS, and DPG.

As to quaternary structure, homodimer. The dihydroxyacetone kinase complex is composed of a homodimer of DhaM, a homodimer of DhaK and the subunit DhaL. DhaL also forms a complex with DhaR. Mg(2+) is required as a cofactor.

The protein localises to the cytoplasm. The catalysed reaction is dihydroxyacetone + phosphoenolpyruvate = dihydroxyacetone phosphate + pyruvate. It participates in polyol metabolism; glycerol degradation. In terms of biological role, ADP-binding subunit of the dihydroxyacetone kinase, which is responsible for the phosphoenolpyruvate (PEP)-dependent phosphorylation of dihydroxyacetone. DhaL-ADP is converted to DhaL-ATP via a phosphoryl group transfer from DhaM and transmits it to dihydroxyacetone bound to DhaK. DhaL also acts as coactivator of the transcription activator DhaR by binding to the sensor domain of DhaR. In the presence of dihydroxyacetone, DhaL-ADP displaces DhaK and stimulates DhaR activity. In the absence of dihydroxyacetone, DhaL-ADP is converted by the PTS to DhaL-ATP, which does not bind to DhaR. The polypeptide is PEP-dependent dihydroxyacetone kinase, ADP-binding subunit DhaL (Escherichia coli (strain K12)).